We begin with the raw amino-acid sequence, 20 residues long: Snaclec ophioluxin subunit alpha (20 aa).

A disulfide bridge links cysteine 4 with cysteine 15. The region spanning 11-20 (YDQHCYRIIN) is the C-type lectin domain.

This sequence belongs to the snaclec family. In terms of assembly, heterodimer of subunits alpha and beta; disulfide-linked. In terms of tissue distribution, expressed by the venom gland.

It is found in the secreted. Functionally, binds to the platelet and collagen receptor glycoprotein VI (GP6) and activates platelet aggregation. In Ophiophagus hannah (King cobra), this protein is Snaclec ophioluxin subunit alpha.